We begin with the raw amino-acid sequence, 383 residues long: Dual-specificity RNA methyltransferase RlmN (383 aa).

Glu94 functions as the Proton acceptor in the catalytic mechanism. The region spanning 100 to 339 is the Radical SAM core domain; the sequence is DGDRATLCVS…VTVRRTRGDD (240 aa). The cysteines at positions 107 and 344 are disulfide-linked. The [4Fe-4S] cluster site is built by Cys114, Cys118, and Cys121. Residues 168-169, Ser200, 222-224, and Asn301 contribute to the S-adenosyl-L-methionine site; these read GE and SLH. Cys344 acts as the S-methylcysteine intermediate in catalysis.

It belongs to the radical SAM superfamily. RlmN family. [4Fe-4S] cluster is required as a cofactor.

Its subcellular location is the cytoplasm. The enzyme catalyses adenosine(2503) in 23S rRNA + 2 reduced [2Fe-2S]-[ferredoxin] + 2 S-adenosyl-L-methionine = 2-methyladenosine(2503) in 23S rRNA + 5'-deoxyadenosine + L-methionine + 2 oxidized [2Fe-2S]-[ferredoxin] + S-adenosyl-L-homocysteine. It carries out the reaction adenosine(37) in tRNA + 2 reduced [2Fe-2S]-[ferredoxin] + 2 S-adenosyl-L-methionine = 2-methyladenosine(37) in tRNA + 5'-deoxyadenosine + L-methionine + 2 oxidized [2Fe-2S]-[ferredoxin] + S-adenosyl-L-homocysteine. In terms of biological role, specifically methylates position 2 of adenine 2503 in 23S rRNA and position 2 of adenine 37 in tRNAs. m2A2503 modification seems to play a crucial role in the proofreading step occurring at the peptidyl transferase center and thus would serve to optimize ribosomal fidelity. The chain is Dual-specificity RNA methyltransferase RlmN from Aliivibrio salmonicida (strain LFI1238) (Vibrio salmonicida (strain LFI1238)).